The primary structure comprises 413 residues: Inactive squalene synthase 2 (413 aa).

Gly2 bears the N-acetylglycine mark. 2 helical membrane passes run 283–303 (AIFQ…ALCY) and 390–410 (AIFV…LKAN).

Belongs to the phytoene/squalene synthase family. The cofactor is Mg(2+). Requires Mn(2+) as cofactor. Mostly expressed in hypocotyls, leaves and cotyledons, and, to a lower extent, in stems.

The protein localises to the endoplasmic reticulum membrane. The protein is Inactive squalene synthase 2 of Arabidopsis thaliana (Mouse-ear cress).